The chain runs to 261 residues: Zinc finger protein 664 (261 aa).

9 C2H2-type zinc fingers span residues 3 to 25 (YKCP…QKIH), 31 to 53 (HKCD…WRDH), 59 to 81 (YKCD…KKIH), 87 to 109 (YKCY…MRVH), 115 to 137 (YVCS…QRVH), 143 to 165 (FKCE…QRVH), 171 to 193 (YKCY…QRVH), 199 to 221 (YRCC…QRVH), and 227 to 249 (FKCD…QRVH). Residue Lys257 forms a Glycyl lysine isopeptide (Lys-Gly) (interchain with G-Cter in SUMO2) linkage.

It belongs to the krueppel C2H2-type zinc-finger protein family.

It is found in the nucleus. May be involved in transcriptional regulation. The sequence is that of Zinc finger protein 664 from Homo sapiens (Human).